A 146-amino-acid polypeptide reads, in one-letter code: Hemoglobin subunit beta (146 aa).

Valine 1 is subject to N-acetylvaline. One can recognise a Globin domain in the interval 2-146; the sequence is HLSGEEKAAV…VANALAHKYH (145 aa). Threonine 12 is subject to Phosphothreonine. Position 44 is a phosphoserine (serine 44). Lysine 59 is subject to N6-acetyllysine. Heme b is bound at residue histidine 63. Residue lysine 82 is modified to N6-acetyllysine. Histidine 92 provides a ligand contact to heme b. The residue at position 93 (cysteine 93) is an S-nitrosocysteine. An N6-acetyllysine modification is found at lysine 144.

It belongs to the globin family. In terms of assembly, heterotetramer of two alpha chains and two beta chains. As to expression, red blood cells.

In terms of biological role, involved in oxygen transport from the lung to the various peripheral tissues. The protein is Hemoglobin subunit beta (HBB) of Pteropus alecto (Black flying fox).